Here is a 311-residue protein sequence, read N- to C-terminus: Aspartate carbamoyltransferase catalytic subunit (311 aa).

Residues arginine 59 and threonine 60 each coordinate carbamoyl phosphate. An L-aspartate-binding site is contributed by lysine 87. Residues arginine 109, histidine 139, and glutamine 142 each coordinate carbamoyl phosphate. The L-aspartate site is built by arginine 172 and arginine 224. 2 residues coordinate carbamoyl phosphate: alanine 265 and proline 266.

Belongs to the aspartate/ornithine carbamoyltransferase superfamily. ATCase family. As to quaternary structure, heterododecamer (2C3:3R2) of six catalytic PyrB chains organized as two trimers (C3), and six regulatory PyrI chains organized as three dimers (R2).

It catalyses the reaction carbamoyl phosphate + L-aspartate = N-carbamoyl-L-aspartate + phosphate + H(+). It participates in pyrimidine metabolism; UMP biosynthesis via de novo pathway; (S)-dihydroorotate from bicarbonate: step 2/3. Catalyzes the condensation of carbamoyl phosphate and aspartate to form carbamoyl aspartate and inorganic phosphate, the committed step in the de novo pyrimidine nucleotide biosynthesis pathway. The polypeptide is Aspartate carbamoyltransferase catalytic subunit (Streptococcus pyogenes serotype M12 (strain MGAS2096)).